The following is a 452-amino-acid chain: UPF0210 protein Daud_1353 (452 aa).

This sequence belongs to the UPF0210 family. As to quaternary structure, homodimer.

The sequence is that of UPF0210 protein Daud_1353 from Desulforudis audaxviator (strain MP104C).